Consider the following 1447-residue polypeptide: Adhesion G protein-coupled receptor L3 (1447 aa).

Residues 1–19 form the signal peptide; sequence MWPSQLLIFMMLLAPIIHA. Topologically, residues 20–862 are extracellular; the sequence is FSRAPIPMAV…VKHSDAVHDL (843 aa). One can recognise an SUEL-type lectin domain in the interval 35 to 124; the sequence is SCESYPIELR…KYLEVQYECV (90 aa). Intrachain disulfides connect Cys-36–Cys-66, Cys-45–Cys-123, Cys-78–Cys-110, Cys-91–Cys-97, and Cys-135–Cys-317. A glycan (N-linked (GlcNAc...) asparagine) is linked at Asn-93. The 260-residue stretch at 134–393 folds into the Olfactomedin-like domain; it reads LCPGLLKGVY…VVKYSLDFGP (260 aa). The interaction with FLRT3 stretch occupies residues 249–279; it reads YHDTSPYRWGGKSDIDLAVDENGLWVIYATE. Ca(2+) contacts are provided by Asp-264, Asn-312, Ala-313, and Val-367. The tract at residues 426 to 473 is disordered; the sequence is DISTTGPLGMGSTTTSTTLRTTTLSPGRSTTPSVSGRRNRSTSTPSPA. The segment covering 428–458 has biased composition (low complexity); it reads STTGPLGMGSTTTSTTLRTTTLSPGRSTTPS. Residues Asn-464, Asn-549, Asn-746, Asn-759, Asn-804, and Asn-830 are each glycosylated (N-linked (GlcNAc...) asparagine). The 180-residue stretch at 675–854 folds into the GAIN-B domain; the sequence is DIVRENTDNI…AVLMAHVEVK (180 aa). 2 disulfide bridges follow: Cys-805/Cys-836 and Cys-824/Cys-838. The GPS stretch occupies residues 805–854; that stretch reads CSFWSYSKRTMTGYWSTQGCRLLTTNKTHTTCSCNHLTNFAVLMAHVEVK. Positions 842 to 855 are stachel; the sequence is TNFAVLMAHVEVKH. The chain crosses the membrane as a helical span at residues 863-888; sequence LLDVITWVGILLSLVCLLICIFTFCF. At 889–896 the chain is on the cytoplasmic side; sequence FRGLQSDR. A helical transmembrane segment spans residues 897-918; the sequence is NTIHKNLCISLFVAELLFLIGI. The Extracellular segment spans residues 919–926; the sequence is NRTDQPIA. A helical transmembrane segment spans residues 927–950; sequence CAVFAALLHFFFLAAFTWMFLEGV. Cys-927 and Cys-999 are joined by a disulfide. The Cytoplasmic segment spans residues 951–967; sequence QLYIMLVEVFESEHSRR. A helical membrane pass occupies residues 968–990; sequence KYFYLVGYGMPALIVAVSAAVDY. At 991-1005 the chain is on the extracellular side; sequence RSYGTDKVCWLRLDT. Residues 1006-1027 traverse the membrane as a helical segment; it reads YFIWSFIGPATLIIMLNVIFLG. At 1028 to 1053 the chain is on the cytoplasmic side; sequence IALYKMFHHTAILKPESGCLDNIKSW. A helical transmembrane segment spans residues 1054-1073; it reads VIGAIALLCLLGLTWAFGLM. Residues 1074–1078 are Extracellular-facing; that stretch reads YINES. N-linked (GlcNAc...) asparagine glycosylation is present at Asn-1076. A helical transmembrane segment spans residues 1079–1104; sequence TVIMAYLFTIFNSLQGMFIFIFHCVL. The Cytoplasmic portion of the chain corresponds to 1105-1447; it reads QKKVRKEYGK…KGPAHLVTSL (343 aa). Residues 1123–1147 are disordered; the sequence is GKSTESSIGSGKTSGSRTPGRYSTG. At Ser-1164 the chain carries Phosphoserine. The interval 1423-1447 is disordered; sequence IVPPNKDGTPPEGSSKGPAHLVTSL. The PDZ-binding signature appears at 1442–1447; the sequence is HLVTSL.

This sequence belongs to the G-protein coupled receptor 2 family. LN-TM7 subfamily. In terms of assembly, heterodimer of 2 chains generated by proteolytic processing; the large extracellular N-terminal fragment and the membrane-bound C-terminal fragment predominantly remain associated and non-covalently linked. Interacts (via olfactomedin-like domain) with FLRT1 (via extracellular domain). Interacts (via olfactomedin-like domain) with FLRT2 (via extracellular domain). Interacts (via olfactomedin-like domain) with FLRT3 (via extracellular domain); the interaction is direct. Interacts (via extracellular domain) with TENM1. Interacts (via extracellular domain) with TENM2. Interacts (via extracellular domain) with TENM3. Identified in a complex with FLRT3 and UNC5B; does not interact with UNC5B by itself. Identified in a complex with FLRT3 and UNC5D; does not interact with UNC5D by itself. Interacts (via PDZ-binding motif) with SHANK3. Interacts (via PDZ-binding motif) with DLG4. Autoproteolytically processed at the GPS region of the GAIN-B domain; this cleavage modulates receptor activity.

It is found in the cell membrane. The protein resides in the postsynaptic cell membrane. It localises to the cell projection. The protein localises to the axon. Its subcellular location is the cell junction. Forms a heterodimer of 2 chains generated by proteolytic processing that remain associated through non-covalent interactions mediated by the GAIN-B domain. In the inactivated receptor, the Stachel sequence (also named stalk) is embedded in the GAIN-B domain, where it adopts a beta-strand conformation. On activation, the Stachel moves into the 7 transmembrane region and adopts a twisted hook-shaped configuration that forms contacts within the receptor, leading to coupling of a G-alpha protein, which activates signaling. The cleaved GAIN-B and N-terminal domains can then dissociate from the rest of the receptor. Orphan adhesion G-protein coupled receptor (aGPCR), which mediates synapse specificity. Ligand binding causes a conformation change that triggers signaling via guanine nucleotide-binding proteins (G proteins) and modulates the activity of downstream effectors. ADGRL3 is coupled with different classes of G alpha proteins, such as G(12)/G(13), G(s), G(i) or G(q), depending on the context. Coupling to G(12)/G(13) G proteins, which mediates the activation Rho small GTPases is the most efficient. Following G-protein coupled receptor activation, associates with cell adhesion molecules that are expressed at the surface of adjacent cells to direct synapse specificity. Specifically mediates the establishment of Schaffer-collateral synapses formed by CA3-region axons on CA1-region pyramidal neurons in the hippocampus. Localizes to postsynaptic spines in excitatory synapses in the S.oriens and S.radiatum and interacts with presynaptic cell adhesion molecules FLRT3 and TENM2, promoting synapse formation. Plays a role in the development of glutamatergic synapses in the cortex. Important in determining the connectivity rates between the principal neurons in the cortex. In terms of biological role, orphan adhesion G-protein coupled receptor (aGPCR), which mediates synapse specificity. Ligand binding causes a conformation change that triggers signaling via guanine nucleotide-binding proteins (G proteins) and modulates the activity of downstream effectors, such as adenylate cyclase. Isoform 1 is specifically coupled to G(s) G proteins and mediates activation of adenylate cyclase activity. Following G-protein coupled receptor activation, undergoes liquid-liquid phase transition, associates with (1) cell adhesion molecules that are expressed at the surface of adjacent cells, as well as (2) PDZ-containing proteins, such as SHANK3 and DLG4, in the cytoplasm to direct synapse formation. This Homo sapiens (Human) protein is Adhesion G protein-coupled receptor L3.